The sequence spans 210 residues: Glutathione S-transferase P (210 aa).

The GST N-terminal domain maps to 2-81 (PPYTVVYFPV…HLGRTLGLYG (80 aa)). Tyrosine 4 is subject to Phosphotyrosine; by EGFR. Residues tyrosine 8, arginine 14, tryptophan 39, lysine 45, and 52 to 53 (QL) each bind glutathione. Residue threonine 62 is modified to Phosphothreonine. 65 to 66 (QS) serves as a coordination point for glutathione. The 122-residue stretch at 83-204 (DQREAALVDM…ASPEHVNLPI (122 aa)) folds into the GST C-terminal domain. N6-succinyllysine occurs at positions 103 and 116. N6-acetyllysine is present on lysine 128.

It belongs to the GST superfamily. Pi family. As to quaternary structure, homodimer. Interacts with CDK5.

It is found in the cytoplasm. Its subcellular location is the mitochondrion. The protein resides in the nucleus. The catalysed reaction is RX + glutathione = an S-substituted glutathione + a halide anion + H(+). The enzyme catalyses prostaglandin J2 + glutathione = prostaglandin J2-S-(R)-glutathione. It carries out the reaction prostaglandin J2 + glutathione = prostaglandin J2-S-(S)-glutathione. It catalyses the reaction prostaglandin A2 + glutathione = prostaglandin A2-S-(S)-glutathione. The catalysed reaction is 11(S)-hydroxy-14(S),15(S)-epoxy-(5Z,8Z,12E)-eicosatrienoate + glutathione = (11S,15S)-dihydroxy-14(R)-S-glutathionyl-(5Z,8Z,12E)-eicosatrienoate. Conjugation of reduced glutathione to a wide number of exogenous and endogenous hydrophobic electrophiles. Involved in the formation of glutathione conjugates of both prostaglandin A2 (PGA2) and prostaglandin J2 (PGJ2). Participates in the formation of novel hepoxilin regioisomers. Negatively regulates CDK5 activity via p25/p35 translocation to prevent neurodegeneration. This is Glutathione S-transferase P (GSTP1) from Pongo abelii (Sumatran orangutan).